Reading from the N-terminus, the 366-residue chain is Carbamoyl phosphate synthase small chain (366 aa).

Residues Met-1–Asp-174 are CPSase. L-glutamine is bound by residues Ser-48, Gly-226, and Gly-228. Residues His-178–Asn-366 form the Glutamine amidotransferase type-1 domain. Cys-256 serves as the catalytic Nucleophile. L-glutamine contacts are provided by Leu-257, Gln-260, Asn-298, Gly-300, and Phe-301. Active-site residues include His-340 and Glu-342.

The protein belongs to the CarA family. Composed of two chains; the small (or glutamine) chain promotes the hydrolysis of glutamine to ammonia, which is used by the large (or ammonia) chain to synthesize carbamoyl phosphate. Tetramer of heterodimers (alpha,beta)4.

It catalyses the reaction hydrogencarbonate + L-glutamine + 2 ATP + H2O = carbamoyl phosphate + L-glutamate + 2 ADP + phosphate + 2 H(+). The enzyme catalyses L-glutamine + H2O = L-glutamate + NH4(+). It participates in amino-acid biosynthesis; L-arginine biosynthesis; carbamoyl phosphate from bicarbonate: step 1/1. The protein operates within pyrimidine metabolism; UMP biosynthesis via de novo pathway; (S)-dihydroorotate from bicarbonate: step 1/3. In terms of biological role, small subunit of the glutamine-dependent carbamoyl phosphate synthetase (CPSase). CPSase catalyzes the formation of carbamoyl phosphate from the ammonia moiety of glutamine, carbonate, and phosphate donated by ATP, constituting the first step of 2 biosynthetic pathways, one leading to arginine and/or urea and the other to pyrimidine nucleotides. The small subunit (glutamine amidotransferase) binds and cleaves glutamine to supply the large subunit with the substrate ammonia. This Chlorobaculum tepidum (strain ATCC 49652 / DSM 12025 / NBRC 103806 / TLS) (Chlorobium tepidum) protein is Carbamoyl phosphate synthase small chain.